The chain runs to 260 residues: MKIKDYAVDTARAVAFLSRLPMPPALFNGYDGRLNRLVRAFPFAGLLIGFVPAVTLLLLLSLRTDPLVAALVALSVQALVTGALHEDGLADTADGIGGGSSREQSLIIMKDSRIGTYGAIALILSFAIRAAALAAIIRHSSPLAAALAIPAVAALSRGAIAWHWQRLPPAKPDGVAASNGQPNEAAMHFALVSAGLLAALLIWPPFGLRPLVAGLLVAGVAGFAFTVFIRRKLAGHTGDTLGATQQICEIATLCALATAL.

A run of 6 helical transmembrane segments spans residues 40–60 (AFPF…LLLL), 64–84 (TDPL…TGAL), 117–137 (YGAI…AAII), 142–162 (PLAA…AIAW), 188–208 (HFAL…PFGL), and 210–230 (PLVA…VFIR).

The protein belongs to the CobS family. Requires Mg(2+) as cofactor.

The protein resides in the cell inner membrane. It carries out the reaction alpha-ribazole + adenosylcob(III)inamide-GDP = adenosylcob(III)alamin + GMP + H(+). It catalyses the reaction alpha-ribazole 5'-phosphate + adenosylcob(III)inamide-GDP = adenosylcob(III)alamin 5'-phosphate + GMP + H(+). It participates in cofactor biosynthesis; adenosylcobalamin biosynthesis; adenosylcobalamin from cob(II)yrinate a,c-diamide: step 7/7. Functionally, joins adenosylcobinamide-GDP and alpha-ribazole to generate adenosylcobalamin (Ado-cobalamin). Also synthesizes adenosylcobalamin 5'-phosphate from adenosylcobinamide-GDP and alpha-ribazole 5'-phosphate. In Rhizobium etli (strain ATCC 51251 / DSM 11541 / JCM 21823 / NBRC 15573 / CFN 42), this protein is Adenosylcobinamide-GDP ribazoletransferase.